The chain runs to 319 residues: Selection and upkeep of intraepithelial T-cells protein 9 (319 aa).

An N-terminal signal peptide occupies residues 1-26; it reads MESSASCLPGFFMSFLLLQNTVLTQA. Positions 27 to 117 constitute an Ig-like V-type domain; sequence MRSDIKINIQ…TNQEKKRSIV (91 aa). The Extracellular segment spans residues 27–139; that stretch reads MRSDIKINIQ…LMSNKFSCPS (113 aa). A disulfide bridge links Cys-47 with Cys-101. Asn-105 carries N-linked (GlcNAc...) asparagine glycosylation. The chain crosses the membrane as a helical span at residues 140 to 160; that stretch reads IYLITIIFLNFLRGILVFCCL. At 161–183 the chain is on the cytoplasmic side; sequence RRKPVCFRNLMSTVMEALYSKMG. The chain crosses the membrane as a helical span at residues 184-204; the sequence is VCCLLIWECLLLVLYIAFLPI. The Extracellular segment spans residues 205 to 228; sequence YVSFRSRAFLLDDTYPLYTNWLWN. The helical transmembrane segment at 229 to 249 threads the bilayer; that stretch reads ICIILTVIMVLFPGLILCLLW. Over 250-319 the chain is Cytoplasmic; the sequence is TLNCYGQVSS…DDTASTLFIS (70 aa).

This sequence belongs to the SKINT family. Expressed in skin, thymus and testis.

It is found in the membrane. In terms of biological role, may act by engaging a cell surface molecule on immature T-cells in the embryonic thymus. In Mus musculus (Mouse), this protein is Selection and upkeep of intraepithelial T-cells protein 9 (Skint9).